We begin with the raw amino-acid sequence, 646 residues long: Serine/threonine-protein kinase sck2 (646 aa).

2 disordered regions span residues 17 to 85 (VSTN…LPEV) and 143 to 176 (GRDIGTSSRDSANVSRSSSMMSSHPIPTPAIQRT). The segment covering 68–80 (SDQSTVGNRNSND) has biased composition (polar residues). Over residues 149 to 165 (SSRDSANVSRSSSMMSS) the composition is skewed to low complexity. Positions 266-527 (FVPLKLIGKG…VEEVMKHPFF (262 aa)) constitute a Protein kinase domain. ATP-binding positions include 272–280 (IGKGTFGQV) and lysine 295. Aspartate 392 functions as the Proton acceptor in the catalytic mechanism. The region spanning 528-605 (DGIDWKKLAA…IDASAMDEAF (78 aa)) is the AGC-kinase C-terminal domain. The interval 609 to 646 (NSNDSASSISSQDDYSKDNSDMDLNRANDEVFMGQIDP) is disordered. Residues 610-621 (SNDSASSISSQD) show a composition bias toward low complexity. Positions 622 to 637 (DYSKDNSDMDLNRAND) are enriched in basic and acidic residues.

This sequence belongs to the protein kinase superfamily. AGC Ser/Thr protein kinase family. PKC subfamily.

The catalysed reaction is L-seryl-[protein] + ATP = O-phospho-L-seryl-[protein] + ADP + H(+). It catalyses the reaction L-threonyl-[protein] + ATP = O-phospho-L-threonyl-[protein] + ADP + H(+). Its function is as follows. Protein kinase that is part of growth control pathway which is at least partially redundant with the cAMP pathway. The polypeptide is Serine/threonine-protein kinase sck2 (sck2) (Schizosaccharomyces pombe (strain 972 / ATCC 24843) (Fission yeast)).